Consider the following 202-residue polypeptide: uncharacterized protein (202 aa).

A helical membrane pass occupies residues Ile175 to Phe195.

Its subcellular location is the membrane. This is an uncharacterized protein from Dictyostelium discoideum (Social amoeba).